A 785-amino-acid chain; its full sequence is Phenylalanine--tRNA ligase beta subunit (785 aa).

The tRNA-binding domain occupies 39-147; the sequence is FPIPRGVVFA…DALPPGTPLA (109 aa). The region spanning 399 to 474 is the B5 domain; sequence KPPEAIPFRP…RIQGYETIPL (76 aa). Mg(2+)-binding residues include D452, D458, E461, and E462. One can recognise an FDX-ACB domain in the interval 688-780; the sequence is SRHPAAFRDL…ALRARGFGLR (93 aa).

This sequence belongs to the phenylalanyl-tRNA synthetase beta subunit family. Type 1 subfamily. As to quaternary structure, tetramer of two alpha and two beta subunits. Mg(2+) is required as a cofactor.

The protein localises to the cytoplasm. The catalysed reaction is tRNA(Phe) + L-phenylalanine + ATP = L-phenylalanyl-tRNA(Phe) + AMP + diphosphate + H(+). The polypeptide is Phenylalanine--tRNA ligase beta subunit (Thermus thermophilus (strain ATCC BAA-163 / DSM 7039 / HB27)).